The sequence spans 284 residues: tRNA uridine(34) hydroxylase (284 aa).

The 95-residue stretch at 132–226 (AGRPVVMLDT…YFEEVGGAHY (95 aa)) folds into the Rhodanese domain. The Cysteine persulfide intermediate role is filled by C186.

This sequence belongs to the TrhO family.

The enzyme catalyses uridine(34) in tRNA + AH2 + O2 = 5-hydroxyuridine(34) in tRNA + A + H2O. In terms of biological role, catalyzes oxygen-dependent 5-hydroxyuridine (ho5U) modification at position 34 in tRNAs. The chain is tRNA uridine(34) hydroxylase from Burkholderia ambifaria (strain MC40-6).